We begin with the raw amino-acid sequence, 1527 residues long: ATP-binding cassette sub-family C member 3 (1527 aa).

The Extracellular portion of the chain corresponds to 1-32; it reads MDALCGSGELGSKFWDSNLSVHTENPDLTPCF. N-linked (GlcNAc...) asparagine glycosylation is present at Asn-18. The chain crosses the membrane as a helical span at residues 33 to 53; sequence QNSLLAWVPCIYLWVALPCYL. Over 54-73 the chain is Cytoplasmic; the sequence is LYLRHHCRGYIILSHLSKLK. The helical transmembrane segment at 74–94 threads the bilayer; that stretch reads MVLGVLLWCVSWADLFYSFHG. At 95–99 the chain is on the extracellular side; sequence LVHGR. A helical transmembrane segment spans residues 100 to 120; the sequence is APAPVFFVTPLVVGVTMLLAT. At 121 to 132 the chain is on the cytoplasmic side; it reads LLIQYERLQGVQ. A helical membrane pass occupies residues 133–153; that stretch reads SSGVLIIFWFLCVVCAIVPFR. Residues 154-171 are Extracellular-facing; the sequence is SKILLAKAEGEISDPFRF. A helical membrane pass occupies residues 172–192; the sequence is TTFYIHFALVLSALILACFRE. At 193–302 the chain is on the cytoplasmic side; sequence KPPFFSAKNV…RPRKPSFLKA (110 aa). The helical transmembrane segment at 303–323 threads the bilayer; the sequence is LLATFGSSFLISACFKLIQDL. The 284-residue stretch at 311 to 594 folds into the ABC transmembrane type-1 1 domain; it reads FLISACFKLI…LPQLISNLTQ (284 aa). Topologically, residues 324–349 are extracellular; it reads LSFINPQLLSILIRFISNPMAPSWWG. A helical membrane pass occupies residues 350–370; it reads FLVAGLMFLCSMMQSLILQHY. The Cytoplasmic segment spans residues 371-426; it reads YHYIFVTGVKFRTGIMGVIYRKALVITNSVKRASTVGEIVNLMSVDAQRFMDLAPF. The helical transmembrane segment at 427 to 447 threads the bilayer; sequence LNLLWSAPLQIILAIYFLWQN. At 448 to 450 the chain is on the extracellular side; sequence LGP. A helical membrane pass occupies residues 451-471; the sequence is SVLAGVAFMVLLIPLNGAVAV. Residues 472 to 533 lie on the Cytoplasmic side of the membrane; the sequence is KMRAFQVKQM…LLRTAAYLHT (62 aa). Residues 534 to 554 traverse the membrane as a helical segment; that stretch reads TTTFTWMCSPFLVTLITLWVY. The Extracellular segment spans residues 555 to 576; it reads VYVDPNNVLDAEKAFVSVSLFN. The chain crosses the membrane as a helical span at residues 577 to 597; the sequence is ILRLPLNMLPQLISNLTQASV. At 598–963 the chain is on the cytoplasmic side; that stretch reads SLKRIQQFLS…VELSVFWDYA (366 aa). In terms of domain architecture, ABC transporter 1 spans 629–851; that stretch reads IHSGTFTWAQ…NGSFANFLCN (223 aa). 661–668 provides a ligand contact to ATP; the sequence is GPVGCGKS. A phosphoserine mark is found at Ser-908 and Ser-911. The disordered stretch occupies residues 910–932; it reads LSSDGEGQGRPVPRRHLGPSEKV. Residues 964-984 traverse the membrane as a helical segment; sequence KAVGLCTTLAICLLYVGQSAA. Residues 971 to 1252 form the ABC transmembrane type-1 2 domain; the sequence is TLAICLLYVG…MIRMMSDLES (282 aa). The Extracellular segment spans residues 985–1021; that stretch reads AIGANVWLSAWTNDAMADSRQNNTSLRLGVYAALGIL. 2 N-linked (GlcNAc...) asparagine glycosylation sites follow: Asn-1006 and Asn-1007. The helical transmembrane segment at 1022–1042 threads the bilayer; sequence QGFLVMLAAMAMAAGGIQAAR. The Cytoplasmic segment spans residues 1043–1085; that stretch reads VLHQALLHNKIRSPQSFFDTTPSGRILNCFSKDIYVVDEVLAP. The helical transmembrane segment at 1086 to 1106 threads the bilayer; that stretch reads VILMLLNSFFNAISTLVVIMA. Position 1107 (Ser-1107) is a topological domain, extracellular. A helical membrane pass occupies residues 1108 to 1128; that stretch reads TPLFTVVILPLAVLYTLVQRF. Over 1129-1199 the chain is Cytoplasmic; sequence YAATSRQLKR…ISNRWLSIGV (71 aa). Residues 1200–1220 traverse the membrane as a helical segment; sequence EFVGNCVVLFAALFAVIGRSS. Residues 1221–1222 lie on the Extracellular side of the membrane; sequence LN. A helical transmembrane segment spans residues 1223 to 1243; it reads PGLVGLSVSYSLQVTFALNWM. The Cytoplasmic segment spans residues 1244–1527; it reads IRMMSDLESN…YGMARDAGLA (284 aa). The ABC transporter 2 domain maps to 1291 to 1523; sequence FRNYSVRYRP…RGIFYGMARD (233 aa). An ATP-binding site is contributed by 1323-1330; it reads GRTGAGKS.

The protein belongs to the ABC transporter superfamily. ABCC family. Conjugate transporter (TC 3.A.1.208) subfamily. As to expression, mainly expressed in the liver. Also expressed in small intestine, colon, prostate, testis, brain and at a lower level in the kidney. In testis, localized to peritubular myoid cells, Leydig cells, along the basal membrane of Sertoli cells and moderately in the adluminal compartment of the seminiferous tubules.

The protein resides in the basolateral cell membrane. It localises to the basal cell membrane. It carries out the reaction taurocholate(in) + ATP + H2O = taurocholate(out) + ADP + phosphate + H(+). It catalyses the reaction glycocholate(in) + ATP + H2O = glycocholate(out) + ADP + phosphate + H(+). The catalysed reaction is taurolithocholate 3-sulfate(in) + ATP + H2O = taurolithocholate 3-sulfate(out) + ADP + phosphate + H(+). The enzyme catalyses taurochenodeoxycholate 3-sulfate(in) + ATP + H2O = taurochenodeoxycholate 3-sulfate(out) + ADP + phosphate + H(+). It carries out the reaction an S-substituted glutathione(in) + ATP + H2O = an S-substituted glutathione(out) + ADP + phosphate + H(+). It catalyses the reaction ATP + H2O + xenobioticSide 1 = ADP + phosphate + xenobioticSide 2.. The catalysed reaction is 17beta-estradiol 17-O-(beta-D-glucuronate)(in) + ATP + H2O = 17beta-estradiol 17-O-(beta-D-glucuronate)(out) + ADP + phosphate + H(+). The enzyme catalyses dehydroepiandrosterone 3-sulfate(in) + ATP + H2O = dehydroepiandrosterone 3-sulfate(out) + ADP + phosphate + H(+). It carries out the reaction leukotriene C4(in) + ATP + H2O = leukotriene C4(out) + ADP + phosphate + H(+). It catalyses the reaction (4Z,15Z)-bilirubin IXalpha C8-beta-D-glucuronoside(in) + ATP + H2O = (4Z,15Z)-bilirubin IXalpha C8-beta-D-glucuronoside(out) + ADP + phosphate + H(+). The catalysed reaction is (4Z,15Z)-bilirubin IXalpha C8,C12-beta-D-bisglucuronoside(in) + ATP + H2O = (4Z,15Z)-bilirubin IXalpha C8,C12-beta-D-bisglucuronoside(out) + ADP + phosphate + H(+). Its function is as follows. ATP-dependent transporter of the ATP-binding cassette (ABC) family that binds and hydrolyzes ATP to enable active transport of various substrates including many drugs, toxicants and endogenous compound across cell membranes. Transports glucuronide conjugates such as bilirubin diglucuronide, estradiol-17-beta-o-glucuronide and GSH conjugates such as leukotriene C4 (LTC4). Transports also various bile salts (taurocholate, glycocholate, taurochenodeoxycholate-3-sulfate, taurolithocholate- 3-sulfate). Does not contribute substantially to bile salt physiology but provides an alternative route for the export of bile acids and glucuronides from cholestatic hepatocytes. May contribute to regulate the transport of organic compounds in testes across the blood-testis-barrier. Can confer resistance to various anticancer drugs, methotrexate, tenoposide and etoposide, by decreasing accumulation of these drugs in cells. This Homo sapiens (Human) protein is ATP-binding cassette sub-family C member 3.